A 280-amino-acid polypeptide reads, in one-letter code: Myelin proteolipid protein A (280 aa).

Topologically, residues 1–10 are cytoplasmic; it reads MGWHDGCIRC. S-palmitoyl cysteine attachment occurs at residues C7 and C10. Residues 11 to 36 form a helical membrane-spanning segment; that stretch reads MVGVPFASVIATVLCFAGVALFCGCG. Residues 37–59 lie on the Extracellular side of the membrane; it reads HEALSGTEKLIETYFSKNYQEYE. Residues 60–88 traverse the membrane as a helical segment; it reads YLIHVINAFQYVIYGIAIFFFLFGILLLA. Residues 89–152 lie on the Cytoplasmic side of the membrane; the sequence is EGFYTTTAIK…LGKWLGHPDK (64 aa). 2 S-palmitoyl cysteine lipidation sites follow: C140 and C142. Residues 153 to 179 form a helical membrane-spanning segment; sequence FVGVTYIITILWILIFACSAVPVYIYF. Residues 180-239 are Extracellular-facing; it reads NTWVTCQSIAFPGKTTTSVSTLCSDARMYGVLPWNAFPGKVCGTSLLAICKTSEFQMTFH. Intrachain disulfides connect C185/C229 and C202/C221. The helical transmembrane segment at 240 to 269 threads the bilayer; the sequence is LFIAAFVGAAATLVALLTYMVGASFNYAVL. Topologically, residues 270–280 are cytoplasmic; it reads RVTGRSDRSKF.

It belongs to the myelin proteolipid protein family.

It is found in the cell membrane. Its function is as follows. This is the major myelin protein from the central nervous system. It plays an important role in the formation or maintenance of the multilamellar structure of myelin. This chain is Myelin proteolipid protein A (plp1-a), found in Xenopus laevis (African clawed frog).